Here is a 348-residue protein sequence, read N- to C-terminus: Abnormal cell lineage protein 44 (348 aa).

The signal sequence occupies residues 1-25 (MRAAPFDFFFQSTALSTFFILCSLA). Disulfide bonds link Cys-91/Cys-102, Cys-141/Cys-149, Cys-151/Cys-165, Cys-213/Cys-227, Cys-215/Cys-222, Cys-272/Cys-299, Cys-282/Cys-294, Cys-298/Cys-338, Cys-314/Cys-329, Cys-316/Cys-326, and Cys-321/Cys-322. Ser-219 carries the O-palmitoleoyl serine; by mom-1 lipid modification. N-linked (GlcNAc...) asparagine glycosylation occurs at Asn-286.

The protein belongs to the Wnt family. In terms of processing, palmitoleoylation is required for efficient binding to frizzled receptors. Depalmitoleoylation leads to Wnt signaling pathway inhibition. Expressed in the tail hypodermis.

The protein localises to the secreted. Its subcellular location is the extracellular space. The protein resides in the extracellular matrix. Functionally, ligand for members of the frizzled family of seven transmembrane receptors. Affects male tail development, vulval precursor cell specification and egg laying. Involved in morphogenesis by influencing polarity of asymmetric cell divisions of the B, U, and F cells in the male, and the T cell in males and hermaphrodites. Controls spindle orientation in B-gamma cell division during male copulatory spicule development. Involved in specification of the P7.p lineage during vulval development. Has a role in providing polarity and default lin-17 localization in axon development and positioning of neuromuscular synapses in DA9 regions by negatively regulating synaptogenesis. Plays a role in motorneuron development by promoting the extension of the anterior neurite of ventral D-type GABAergic motorneurons along the anterior-posterior axis of the ventral nerve cord. Positively regulates cilium position and dendrite morphogenesis in postembryonic PQR gas-sensing neurons. This is likely through regulating the localization of grdn-1 to the distal dendrites of PQR sensory neurons. In Caenorhabditis elegans, this protein is Abnormal cell lineage protein 44.